A 327-amino-acid polypeptide reads, in one-letter code: E3 ubiquitin ligase RNF121 (327 aa).

Alanine 2 is subject to N-acetylalanine. The next 5 membrane-spanning stretches (helical) occupy residues 50–70, 79–99, 100–120, 148–168, and 172–192; these read MHAEMVLILIATLVVAQLLLV, SYNMVTLFQMWVVPLYFTVKL, HWWRFLVIWILFSAVTAFVTF, ATGIVGYMAVMFTLFGLNLLF, and PEDAMDFGISLLFYGLYYGVL. An RING-type; atypical zinc finger spans residues 226–276; the sequence is CAVCGQQIFVDVSEEGIIENTYRLSCNHVFHEFCIRGWCIVGKKQTCPYCK. A helical transmembrane segment spans residues 306–326; it reads LVAWQPVIIGVVQGINYILGL.

Belongs to the RNF121 family.

The protein localises to the endoplasmic reticulum membrane. The enzyme catalyses S-ubiquitinyl-[E2 ubiquitin-conjugating enzyme]-L-cysteine + [acceptor protein]-L-lysine = [E2 ubiquitin-conjugating enzyme]-L-cysteine + N(6)-ubiquitinyl-[acceptor protein]-L-lysine.. Its pathway is protein modification; protein ubiquitination. In terms of biological role, E3 ubiquitin ligase which accepts ubiquitin and transfers it to substrates thereby promoting their degradation by the endoplasmic reticulum-associated degradation (ERAD) pathway which is a pathway involved in ubiquitin-dependent degradation of misfolded endoplasmic reticulum proteins. May regulate the unfolded protein response to reduce endoplasmic reticulum stress. The sequence is that of E3 ubiquitin ligase RNF121 (RNF121) from Homo sapiens (Human).